Reading from the N-terminus, the 694-residue chain is Junctophilin-2 (694 aa).

Residues 1-672 lie on the Cytoplasmic side of the membrane; it reads MSGGRFDFDD…EVEVEEVPNT (672 aa). 6 MORN repeats span residues 14–36, 38–59, 60–79, 82–104, 106–128, and 129–151; these read YCGG…KGQG, YSGS…SGNT, FEGY…TKGR, YKGE…SSGA, YEGT…DGGT, and YQGQ…PYGM. A phosphoserine mark is found at S162 and S165. Disordered regions lie at residues 164–192 and 231–278; these read SSLR…ALPS and RAES…AAPF. The segment covering 176–189 has biased composition (low complexity); it reads APDSPASPAADGPA. The span at 235 to 244 shows a compositional bias: polar residues; sequence RTSVGSQRSR. Positions 250–267 are enriched in low complexity; sequence SDLSSGASDAASTASLGE. 2 MORN repeats span residues 290 to 312 and 313 to 335; these read YMGE…SGLR and YEGE…DGHR. The short motif at 350-364 is the Bipartite nuclear localization signal element; it reads KRRVLPLKSNKVRQK. Residues S445, S447, and S466 each carry the phosphoserine modification. The tract at residues 448 to 663 is disordered; the sequence is LLEPPDRGAA…KEAAQAAEAE (216 aa). Residues 467-476 are compositionally biased toward basic and acidic residues; sequence PQLHERETPR. Phosphothreonine is present on T474. Over residues 478–491 the composition is skewed to pro residues; the sequence is EGGPPSPAGTPPQP. Position 483 is a phosphoserine (S483). T487 is modified (phosphothreonine). Positions 492-496 match the Nuclear localization signal motif; that stretch reads KRPRP. A compositionally biased stretch (low complexity) spans 522-540; the sequence is SRPATPAAAGAGRRSPARP. A phosphoserine mark is found at S536, S542, S596, and S600. Low complexity predominate over residues 589 to 610; sequence PEAADPDSAPASPATAPGQAPA. Residues 673–693 traverse the membrane as a helical; Anchor for type IV membrane protein segment; sequence VLICMVILLNIGLAILFVHLL.

This sequence belongs to the junctophilin family. Interacts with TRPC3. Interacts with BAG5 and HSPA8; the interaction with HSPA8 is increased in the presence of BAG5. Junctophilin-2 N-terminal fragment: Interacts with MEF2C. In terms of processing, proteolytically cleaved by calpain in response to cardiac stress. The major cleavage site takes place at the C-terminus and leads to the release of the Junctophilin-2 N-terminal fragment chain (JP2NT). Post-translationally, phosphorylation on Ser-165, probably by PKC, affects RYR1-mediated calcium ion release, interaction with TRPC3, and skeletal muscle myotubule development.

It is found in the cell membrane. The protein localises to the sarcoplasmic reticulum membrane. It localises to the endoplasmic reticulum membrane. The protein resides in the nucleus. Its function is as follows. Membrane-binding protein that provides a structural bridge between the plasma membrane and the sarcoplasmic reticulum and is required for normal excitation-contraction coupling in cardiomyocytes. Provides a structural foundation for functional cross-talk between the cell surface and intracellular Ca(2+) release channels by maintaining the 12-15 nm gap between the sarcolemma and the sarcoplasmic reticulum membranes in the cardiac dyads. Necessary for proper intracellular Ca(2+) signaling in cardiac myocytes via its involvement in ryanodine receptor-mediated calcium ion release. Contributes to the construction of skeletal muscle triad junctions. In terms of biological role, transcription repressor required to safeguard against the deleterious effects of cardiac stress. Generated following cleavage of the Junctophilin-2 chain by calpain in response to cardiac stress in cardiomyocytes. Following cleavage and release from the membrane, translocates to the nucleus, binds DNA and represses expression of genes implicated in cell growth and differentiation, hypertrophy, inflammation and fibrosis. Modifies the transcription profile and thereby attenuates pathological remodeling in response to cardiac stress. Probably acts by competing with MEF2 transcription factors and TATA-binding proteins. The chain is Junctophilin-2 (JPH2) from Oryctolagus cuniculus (Rabbit).